The chain runs to 468 residues: 3-isopropylmalate dehydratase large subunit (468 aa).

[4Fe-4S] cluster is bound by residues cysteine 349, cysteine 409, and cysteine 412.

It belongs to the aconitase/IPM isomerase family. LeuC type 1 subfamily. As to quaternary structure, heterodimer of LeuC and LeuD. It depends on [4Fe-4S] cluster as a cofactor.

It catalyses the reaction (2R,3S)-3-isopropylmalate = (2S)-2-isopropylmalate. It participates in amino-acid biosynthesis; L-leucine biosynthesis; L-leucine from 3-methyl-2-oxobutanoate: step 2/4. In terms of biological role, catalyzes the isomerization between 2-isopropylmalate and 3-isopropylmalate, via the formation of 2-isopropylmaleate. The polypeptide is 3-isopropylmalate dehydratase large subunit (Nitrobacter hamburgensis (strain DSM 10229 / NCIMB 13809 / X14)).